Reading from the N-terminus, the 444-residue chain is Methionine aminopeptidase 2-1 (444 aa).

The tract at residues 1-92 is disordered; the sequence is MAAQVTEKLQ…VPVSNLFPNN (92 aa). Residues 15–29 are compositionally biased toward polar residues; sequence NGQNGDAKANSTAVG. Residues 34–45 show a composition bias toward acidic residues; that stretch reads GEAEDDSDDEKE. Positions 59–73 are enriched in basic residues; it reads AKKKKRKSKKKKKGG. H197 contacts substrate. Positions 217, 228, and 297 each coordinate a divalent metal cation. H305 lines the substrate pocket. The a divalent metal cation site is built by E330 and E425.

The protein belongs to the peptidase M24A family. Methionine aminopeptidase eukaryotic type 2 subfamily. Co(2+) is required as a cofactor. It depends on Zn(2+) as a cofactor. Mn(2+) serves as cofactor. The cofactor is Fe(2+).

The protein resides in the cytoplasm. It catalyses the reaction Release of N-terminal amino acids, preferentially methionine, from peptides and arylamides.. Cotranslationally removes the N-terminal methionine from nascent proteins. The N-terminal methionine is often cleaved when the second residue in the primary sequence is small and uncharged (Met-Ala-, Cys, Gly, Pro, Ser, Thr, or Val). This Neosartorya fischeri (strain ATCC 1020 / DSM 3700 / CBS 544.65 / FGSC A1164 / JCM 1740 / NRRL 181 / WB 181) (Aspergillus fischerianus) protein is Methionine aminopeptidase 2-1.